A 365-amino-acid chain; its full sequence is Chorismate synthase (365 aa).

NADP(+) contacts are provided by Arg-48 and Arg-54. FMN contacts are provided by residues 125–127, 237–238, Gly-277, 292–296, and Arg-318; these read RSS, NA, and KPTSS.

The protein belongs to the chorismate synthase family. Homotetramer. FMNH2 serves as cofactor.

The enzyme catalyses 5-O-(1-carboxyvinyl)-3-phosphoshikimate = chorismate + phosphate. The protein operates within metabolic intermediate biosynthesis; chorismate biosynthesis; chorismate from D-erythrose 4-phosphate and phosphoenolpyruvate: step 7/7. In terms of biological role, catalyzes the anti-1,4-elimination of the C-3 phosphate and the C-6 proR hydrogen from 5-enolpyruvylshikimate-3-phosphate (EPSP) to yield chorismate, which is the branch point compound that serves as the starting substrate for the three terminal pathways of aromatic amino acid biosynthesis. This reaction introduces a second double bond into the aromatic ring system. This chain is Chorismate synthase, found in Polaromonas naphthalenivorans (strain CJ2).